The following is a 529-amino-acid chain: Phospholipase A1-Igamma2, chloroplastic (529 aa).

The N-terminal 43 residues, 1-43 (MAAIPSHNNLLTINHKNSITGSSSLNTNFSEINFPAKFRVATR), are a transit peptide targeting the chloroplast. Positions 316 to 320 (GHSLG) match the GXSXG motif. Ser-318 acts as the Acyl-ester intermediate in catalysis. Active-site charge relay system residues include Asp-381 and His-437.

The protein belongs to the AB hydrolase superfamily. Lipase family. Interacts with SBP1. In terms of tissue distribution, widely expressed. Highly expressed in leaves and stems.

It localises to the plastid. The protein resides in the chloroplast. The enzyme catalyses 1,2-dihexadecanoyl-sn-glycero-3-phosphocholine + H2O = 2-hexadecanoyl-sn-glycero-3-phosphocholine + hexadecanoate + H(+). It carries out the reaction a 1,2-diacyl-3-O-(beta-D-galactosyl)-sn-glycerol + H2O = an acyl-3-O-(beta-D-galactosyl)-sn-glycerol + a fatty acid + H(+). It catalyses the reaction a 1,2-diacyl-3-O-[alpha-D-galactosyl-(1-&gt;6)-beta-D-galactosyl]-sn-glycerol + H2O = acyl-3-O-[alpha-D-galactosyl-(1-&gt;6)-beta-D-galactosyl]-sn-glycerol + a fatty acid + H(+). The catalysed reaction is a triacylglycerol + H2O = a diacylglycerol + a fatty acid + H(+). In terms of biological role, acylhydrolase with broad specificity. Catalyzes the hydrolysis of phosphatidylcholine at the sn-1 position. Possesses moderate activity toward phosphatidylcholine (PC), monogalactosyldiacylglycerol (MGDG), digalactosyldiacylglycerol (DGDG) and triacylglycerol (TAG). The sequence is that of Phospholipase A1-Igamma2, chloroplastic from Arabidopsis thaliana (Mouse-ear cress).